A 66-amino-acid chain; its full sequence is Large ribosomal subunit protein uL29 (66 aa).

Belongs to the universal ribosomal protein uL29 family.

This Rhizobium etli (strain ATCC 51251 / DSM 11541 / JCM 21823 / NBRC 15573 / CFN 42) protein is Large ribosomal subunit protein uL29.